Reading from the N-terminus, the 152-residue chain is 17.1 kDa class II heat shock protein (152 aa).

One can recognise a sHSP domain in the interval 36–152 (DAKAMAATPA…KPKTIQVKVA (117 aa)).

Belongs to the small heat shock protein (HSP20) family.

The protein localises to the cytoplasm. In Pisum sativum (Garden pea), this protein is 17.1 kDa class II heat shock protein (HSP17.7).